Reading from the N-terminus, the 443-residue chain is Proline--tRNA ligase (443 aa).

The protein belongs to the class-II aminoacyl-tRNA synthetase family. ProS type 2 subfamily. As to quaternary structure, homodimer.

The protein localises to the cytoplasm. It catalyses the reaction tRNA(Pro) + L-proline + ATP = L-prolyl-tRNA(Pro) + AMP + diphosphate. Functionally, catalyzes the attachment of proline to tRNA(Pro) in a two-step reaction: proline is first activated by ATP to form Pro-AMP and then transferred to the acceptor end of tRNA(Pro). The polypeptide is Proline--tRNA ligase (Caulobacter vibrioides (strain ATCC 19089 / CIP 103742 / CB 15) (Caulobacter crescentus)).